Here is an 876-residue protein sequence, read N- to C-terminus: Valine--tRNA ligase (876 aa).

Positions 44-54 match the 'HIGH' region motif; it reads PNVTGKLHLGH. The 'KMSKS' region signature appears at 520-524; it reads KMSKS. K523 contributes to the ATP binding site. The stretch at 805-876 forms a coiled coil; sequence LEGLIDMDKE…VKSRIEQLKA (72 aa).

The protein belongs to the class-I aminoacyl-tRNA synthetase family. ValS type 1 subfamily. Monomer.

It localises to the cytoplasm. It catalyses the reaction tRNA(Val) + L-valine + ATP = L-valyl-tRNA(Val) + AMP + diphosphate. Its function is as follows. Catalyzes the attachment of valine to tRNA(Val). As ValRS can inadvertently accommodate and process structurally similar amino acids such as threonine, to avoid such errors, it has a 'posttransfer' editing activity that hydrolyzes mischarged Thr-tRNA(Val) in a tRNA-dependent manner. The protein is Valine--tRNA ligase of Staphylococcus epidermidis (strain ATCC 35984 / DSM 28319 / BCRC 17069 / CCUG 31568 / BM 3577 / RP62A).